The sequence spans 1736 residues: Hybrid signal transduction histidine kinase I (1736 aa).

Residues His143–Asn161 show a composition bias toward low complexity. The disordered stretch occupies residues His143–Ser171. The PAC domain occupies Phe234–Glu286. The PAS domain maps to Glu287–Pro358. Residues Thr378–Thr469 are disordered. The span at Ser379–Ser389 shows a compositional bias: low complexity. Over residues Pro392–Tyr412 the composition is skewed to polar residues. A compositionally biased stretch (low complexity) spans Ser413–Thr469. The 353-residue stretch at Asn556 to Ser908 folds into the Histidine kinase domain. His559 is modified (phosphohistidine; by autocatalysis). 7 disordered regions span residues Asn711 to Lys821, Thr952 to Gly971, Asn1080 to Ser1124, Pro1157 to Pro1258, Ser1277 to Gly1301, Ala1330 to Ser1393, and Ser1419 to Leu1520. Composition is skewed to acidic residues over residues Ser725 to Asn735 and Glu758 to Thr789. Low complexity-rich tracts occupy residues Ser790–Asn807, Asp961–Gly971, and Asn1080–Ile1096. Residues Gln1097–Lys1117 are compositionally biased toward polar residues. 2 stretches are compositionally biased toward low complexity: residues Ser1186–Ser1195 and Thr1202–Pro1258. The span at Ala1330–Gly1339 shows a compositional bias: polar residues. 4 stretches are compositionally biased toward low complexity: residues Tyr1340–Gln1376, Asn1425–Glu1475, Ser1482–Ser1492, and Ser1506–Leu1520. The Response regulatory domain maps to Lys1551–Ile1674. Asp1605 carries the post-translational modification 4-aspartylphosphate. The segment covering Asn1695–Ile1722 has biased composition (low complexity). The disordered stretch occupies residues Asn1695–Ile1736.

Activation probably requires transfer of a phosphate group between a histidine in the kinase core (transmitter) domain and an aspartate of the receiver domain.

It carries out the reaction ATP + protein L-histidine = ADP + protein N-phospho-L-histidine.. In terms of biological role, acts as a receptor histidine kinase for a signal transduction pathway. This protein undergoes an ATP-dependent autophosphorylation at a conserved histidine residue in the kinase core, and a phosphoryl group is then transferred to a conserved aspartate residue in the receiver domain. The chain is Hybrid signal transduction histidine kinase I (dhkI-1) from Dictyostelium discoideum (Social amoeba).